A 291-amino-acid polypeptide reads, in one-letter code: Tyramine--L-glutamate ligase (291 aa).

Residues 104–274 (KYPVKNLGCS…LAELLIKNAN (171 aa)) enclose the ATP-grasp domain. 131–176 (KDYVKTPKTFKPKKYVIKKIDGCGGKFNLFDENFLIQEFVEGESLS) provides a ligand contact to ATP. Asp236, Glu247, and Asn249 together coordinate Mg(2+). 3 residues coordinate Mn(2+): Asp236, Glu247, and Asn249.

Mg(2+) serves as cofactor. It depends on Mn(2+) as a cofactor.

The catalysed reaction is tyramine + L-glutamate + ATP = gamma-L-glutamyltyramine + ADP + phosphate + H(+). It participates in cofactor biosynthesis; methanofuran biosynthesis. In terms of biological role, catalyzes the formation of an amide bond between tyramine and the gamma carboxy group of L-glutamate. The enzyme also accepts phenylethylamine in vitro. This chain is Tyramine--L-glutamate ligase, found in Methanocaldococcus fervens (strain DSM 4213 / JCM 15782 / AG86) (Methanococcus fervens).